The following is a 375-amino-acid chain: Probable Na(+)/H(+) antiporter GerT (375 aa).

The next 10 helical transmembrane spans lie at Pro-27–Ile-47, Ala-89–Ile-109, His-112–Leu-132, Thr-145–Met-165, Ile-183–Met-203, Leu-204–Phe-224, Tyr-226–Ile-246, Pro-261–Phe-281, Leu-288–Leu-308, and Glu-350–Leu-370.

This sequence belongs to the monovalent cation:proton antiporter 2 (CPA2) transporter (TC 2.A.37) family.

The protein localises to the membrane. Functionally, contributes to the success of spore outgrowth from the germinated state during alkaline or Na(+) stress. Does not have a significant role in germination. The polypeptide is Probable Na(+)/H(+) antiporter GerT (gerT) (Bacillus cereus).